The sequence spans 1894 residues: Fibronectin type III domain-containing protein 1 (1894 aa).

Positions 1 to 32 are cleaved as a signal peptide; sequence MAPEAGATLRAPRRLSWAALLLLAALLPVASS. The region spanning 39–131 is the Fibronectin type-III 1 domain; it reads HPLKPRHVKL…PVYRAESPPG (93 aa). Residue Asn-149 is glycosylated (N-linked (GlcNAc...) asparagine). Fibronectin type-III domains lie at 158–258, 262–357, and 362–457; these read PNKP…SEED, VPDD…TPES, and APEN…MPTT. Disordered regions lie at residues 455-500, 515-1271, 1311-1350, and 1444-1515; these read PTTS…PQGR, ANGG…TVSP, LSRQ…IING, and THPP…CPPG. The span at 565-574 shows a compositional bias: basic residues; sequence TLRPPSRHGH. Residues 614–625 are compositionally biased toward low complexity; it reads PSASASPAHHAS. Residues 626 to 641 are compositionally biased toward polar residues; it reads TQGTSHRPSLPASLND. 2 stretches are compositionally biased toward low complexity: residues 711–722 and 759–778; these read SASAPPSRLSPP and SRST…TQVS. Ser-717 is subject to Phosphoserine. Residues 786 to 799 are compositionally biased toward basic and acidic residues; sequence GESHGDGDREDGGR. Polar residues-rich tracts occupy residues 941–957 and 1027–1060; these read KYSS…QSTD and SPSQ…TASS. A compositionally biased stretch (acidic residues) spans 1071 to 1088; sequence QDEDAQGSYDDDSTEVEA. Polar residues predominate over residues 1166 to 1176; sequence PLSSKSQQSVS. Residues 1197 to 1209 show a composition bias toward low complexity; that stretch reads SSSVPKWPSSSTP. Over residues 1211–1226 the composition is skewed to basic and acidic residues; the sequence is GGKDADGSLAKEEREP. The span at 1445–1504 shows a compositional bias: low complexity; the sequence is HPPTTTMQPTTTTTPLPTTTTPRPTTATTRRTTTTRRTTTRRPTTTVRTTTRTTTTTTPT. One can recognise a Fibronectin type-III 5 domain in the interval 1658–1752; the sequence is APRNITVVAV…PSVSFVTESD (95 aa). Asn-1661 is a glycosylation site (N-linked (GlcNAc...) asparagine).

As to expression, almost absent from healthy skin; especially in epidermal keratinocytes, skin fibroblasts or endothelial cells and is barely detectable in benign melanocytic naevi. Expressed in the stroma close to skin tumors, in the tumor cells themselves and in the epidermis of psoriasis.

Its subcellular location is the secreted. In terms of biological role, may be an activator of G protein signaling. The protein is Fibronectin type III domain-containing protein 1 (FNDC1) of Homo sapiens (Human).